Reading from the N-terminus, the 213-residue chain is Ribosomal RNA large subunit methyltransferase E (213 aa).

S-adenosyl-L-methionine is bound by residues G60, W62, D80, D96, and D121. The active-site Proton acceptor is the K161.

This sequence belongs to the class I-like SAM-binding methyltransferase superfamily. RNA methyltransferase RlmE family.

It localises to the cytoplasm. It catalyses the reaction uridine(2552) in 23S rRNA + S-adenosyl-L-methionine = 2'-O-methyluridine(2552) in 23S rRNA + S-adenosyl-L-homocysteine + H(+). Specifically methylates the uridine in position 2552 of 23S rRNA at the 2'-O position of the ribose in the fully assembled 50S ribosomal subunit. The protein is Ribosomal RNA large subunit methyltransferase E of Xylella fastidiosa (strain 9a5c).